A 99-amino-acid chain; its full sequence is Malonate decarboxylase acyl carrier protein (99 aa).

Ser25 bears the O-(phosphoribosyl dephospho-coenzyme A)serine mark.

Belongs to the MdcC family. In terms of processing, covalently binds the prosthetic group of malonate decarboxylase.

The protein resides in the cytoplasm. Its function is as follows. Subunit of malonate decarboxylase, it is an acyl carrier protein to which acetyl and malonyl thioester residues are bound via a 2'-(5''-phosphoribosyl)-3'-dephospho-CoA prosthetic group and turn over during the catalytic mechanism. This chain is Malonate decarboxylase acyl carrier protein, found in Pseudomonas putida (strain GB-1).